Reading from the N-terminus, the 570-residue chain is D-xylulose kinase A (570 aa).

The substrate site is built by His-95, Arg-166, Asp-282, and Asn-283. ATP-binding positions include Trp-364, 469-470 (GG), and Asn-473.

This sequence belongs to the FGGY kinase family.

The protein resides in the cytoplasm. The catalysed reaction is D-xylulose + ATP = D-xylulose 5-phosphate + ADP + H(+). Its function is as follows. Highly specific D-xylulose kinase which participates in the catabolism of xylose. Xylose is a major component of hemicelluloses such as xylan. Most fungi utilize D-xylose via three enzymatic reactions, xylose reductase (XR), xylitol dehydrogenase (XDH), and xylulokinase, to form xylulose 5-phosphate, which enters pentose phosphate pathway. The sequence is that of D-xylulose kinase A (xkiA) from Aspergillus niger.